The primary structure comprises 85 residues: Cysteine-rich venom protein 1 (85 aa).

An N-terminal signal peptide occupies residues 1–21 (MCRYALIVLVVVVVATNLSEA). Cystine bridges form between Cys29–Cys63, Cys38–Cys59, Cys42–Cys53, Cys46–Cys84, and Cys65–Cys78. The TIL domain occupies 29–84 (CEPNRIYKTCGPACPPTCEDPDPDCNETPQCKAGCFCIPGLIENMKGGNCISPSLC).

It belongs to the serine protease inhibitor-like (TIL domain-containing) family. As to expression, expressed by the venom gland.

The protein resides in the secreted. In terms of biological role, may be a phenoloxidase inhibitor that stabilizes or inhibits venom phenoloxidase while it is stored in the venom sac. This chain is Cysteine-rich venom protein 1, found in Pimpla hypochondriaca (Parasitoid wasp).